Here is a 396-residue protein sequence, read N- to C-terminus: 1-deoxy-D-xylulose 5-phosphate reductoisomerase (396 aa).

Positions 13, 14, 15, 16, and 127 each coordinate NADPH. Lys128 provides a ligand contact to 1-deoxy-D-xylulose 5-phosphate. Glu129 is an NADPH binding site. Asp153 provides a ligand contact to Mn(2+). Residues Ser154, Glu155, Ser184, and His207 each coordinate 1-deoxy-D-xylulose 5-phosphate. Position 155 (Glu155) interacts with Mn(2+). An NADPH-binding site is contributed by Gly213. Residues Ser220, Asn225, Lys226, and Glu229 each contribute to the 1-deoxy-D-xylulose 5-phosphate site. Glu229 is a Mn(2+) binding site.

This sequence belongs to the DXR family. The cofactor is Mg(2+). Mn(2+) serves as cofactor.

The enzyme catalyses 2-C-methyl-D-erythritol 4-phosphate + NADP(+) = 1-deoxy-D-xylulose 5-phosphate + NADPH + H(+). It functions in the pathway isoprenoid biosynthesis; isopentenyl diphosphate biosynthesis via DXP pathway; isopentenyl diphosphate from 1-deoxy-D-xylulose 5-phosphate: step 1/6. Its function is as follows. Catalyzes the NADPH-dependent rearrangement and reduction of 1-deoxy-D-xylulose-5-phosphate (DXP) to 2-C-methyl-D-erythritol 4-phosphate (MEP). This chain is 1-deoxy-D-xylulose 5-phosphate reductoisomerase, found in Stutzerimonas stutzeri (strain A1501) (Pseudomonas stutzeri).